The sequence spans 366 residues: Peptide chain release factor 1 (366 aa).

N5-methylglutamine is present on glutamine 239.

The protein belongs to the prokaryotic/mitochondrial release factor family. Post-translationally, methylated by PrmC. Methylation increases the termination efficiency of RF1.

Its subcellular location is the cytoplasm. Peptide chain release factor 1 directs the termination of translation in response to the peptide chain termination codons UAG and UAA. This chain is Peptide chain release factor 1, found in Baumannia cicadellinicola subsp. Homalodisca coagulata.